Reading from the N-terminus, the 422-residue chain is MSQPFALHHDGENQMQRRGKMNTRSNGLSGQKRAALGVITNQVNQQVRIQPSRAAKPKSSEFNIQDENAFTKKNAKTFGQQPSQFSVFVDPTPAAPVQKAPTSHVTDIPAALTTLQRVPLTEVPGSPDIISLEDSMESPMILDLPEEEKPLDREAVILTVPEYEEDIYNYLRQAEMKNRAKPGYMKRQTDITTSMRCILVDWLVEVSEEDKLHRETLFLGVNYIDRFLSKISVLRGKLQLVGAASMFLAAKYEEIYPPDVKEFAYITDDTYTSQQVLRMEHLILKVLTFDVAVPTTNWFCEDFLKSCDADDKLKSLTMFLTELTLIDMDAYLKYLPSITAAAALCLARYSLGIEPWPQNLVKKTGYEIGHFVDCLKDLHKTSLGAESHQQQAVQEKYKQDKYHQVSDFSKNPVPHNLALLAL.

Residues 1 to 29 (MSQPFALHHDGENQMQRRGKMNTRSNGLS) form a disordered region.

This sequence belongs to the cyclin family. Cyclin AB subfamily.

Functionally, essential for the control of the cell cycle at the G2/M (mitosis) transition. Interacts with the CDC2 and CDK2 protein kinases to form MPF. G2/M cyclins accumulate steadily during G2 and are abruptly destroyed at mitosis. The polypeptide is G2/mitotic-specific cyclin-A (Spisula solidissima (Atlantic surf-clam)).